The chain runs to 459 residues: Bifunctional protein GlmU (459 aa).

The segment at 1-230 (MSNRFAVILA…FDETLGVNDR (230 aa)) is pyrophosphorylase. UDP-N-acetyl-alpha-D-glucosamine contacts are provided by residues 9–12 (LAAG), K23, Q73, and 78–79 (GT). Position 103 (D103) interacts with Mg(2+). 4 residues coordinate UDP-N-acetyl-alpha-D-glucosamine: G140, E155, N170, and N228. Mg(2+) is bound at residue N228. Residues 231-251 (VALSQAEIIMKNRINRKNMVN) form a linker region. Positions 252 to 459 (GVTIIDPSNT…VDQLLNKKKS (208 aa)) are N-acetyltransferase. The UDP-N-acetyl-alpha-D-glucosamine site is built by R333 and K351. H363 (proton acceptor) is an active-site residue. 2 residues coordinate UDP-N-acetyl-alpha-D-glucosamine: Y366 and N377. Residues 386 to 387 (NY), A423, and R440 contribute to the acetyl-CoA site.

In the N-terminal section; belongs to the N-acetylglucosamine-1-phosphate uridyltransferase family. This sequence in the C-terminal section; belongs to the transferase hexapeptide repeat family. Homotrimer. It depends on Mg(2+) as a cofactor.

It localises to the cytoplasm. The enzyme catalyses alpha-D-glucosamine 1-phosphate + acetyl-CoA = N-acetyl-alpha-D-glucosamine 1-phosphate + CoA + H(+). The catalysed reaction is N-acetyl-alpha-D-glucosamine 1-phosphate + UTP + H(+) = UDP-N-acetyl-alpha-D-glucosamine + diphosphate. It functions in the pathway nucleotide-sugar biosynthesis; UDP-N-acetyl-alpha-D-glucosamine biosynthesis; N-acetyl-alpha-D-glucosamine 1-phosphate from alpha-D-glucosamine 6-phosphate (route II): step 2/2. It participates in nucleotide-sugar biosynthesis; UDP-N-acetyl-alpha-D-glucosamine biosynthesis; UDP-N-acetyl-alpha-D-glucosamine from N-acetyl-alpha-D-glucosamine 1-phosphate: step 1/1. The protein operates within bacterial outer membrane biogenesis; LPS lipid A biosynthesis. Catalyzes the last two sequential reactions in the de novo biosynthetic pathway for UDP-N-acetylglucosamine (UDP-GlcNAc). The C-terminal domain catalyzes the transfer of acetyl group from acetyl coenzyme A to glucosamine-1-phosphate (GlcN-1-P) to produce N-acetylglucosamine-1-phosphate (GlcNAc-1-P), which is converted into UDP-GlcNAc by the transfer of uridine 5-monophosphate (from uridine 5-triphosphate), a reaction catalyzed by the N-terminal domain. The polypeptide is Bifunctional protein GlmU (Bacillus thuringiensis subsp. konkukian (strain 97-27)).